Here is a 62-residue protein sequence, read N- to C-terminus: Small ribosomal subunit protein bS21 (62 aa).

Over residues 43-52 the composition is skewed to basic and acidic residues; sequence VKKKLKSEAA. Positions 43–62 are disordered; that stretch reads VKKKLKSEAARKRKNRRRFK. Over residues 53–62 the composition is skewed to basic residues; it reads RKRKNRRRFK.

The protein belongs to the bacterial ribosomal protein bS21 family.

This Lactiplantibacillus plantarum (strain ATCC BAA-793 / NCIMB 8826 / WCFS1) (Lactobacillus plantarum) protein is Small ribosomal subunit protein bS21.